The primary structure comprises 231 residues: D-allulose-6-phosphate 3-epimerase (231 aa).

Ser6 is a substrate binding site. Residues His30, Asp32, and His63 each contribute to the a divalent metal cation site. The Proton acceptor role is filled by Asp32. Substrate is bound by residues His63, Gly140–Gly143, Asp173–Ser175, and Gly195–Ser197. Asp173 provides a ligand contact to a divalent metal cation. Asp173 acts as the Proton donor in catalysis.

Belongs to the ribulose-phosphate 3-epimerase family. AlsE subfamily. As to quaternary structure, homohexamer. Trimer of dimers. The cofactor is Co(2+). Mn(2+) is required as a cofactor. Requires Zn(2+) as cofactor.

The catalysed reaction is D-allulose 6-phosphate = keto-D-fructose 6-phosphate. It functions in the pathway carbohydrate degradation; D-allose degradation. Functionally, catalyzes the reversible epimerization of D-allulose 6-phosphate to D-fructose 6-phosphate. Can also catalyze with lower efficiency the reversible epimerization of D-ribulose 5-phosphate to D-xylulose 5-phosphate. This Escherichia coli (strain K12) protein is D-allulose-6-phosphate 3-epimerase.